Here is a 212-residue protein sequence, read N- to C-terminus: Inactive ribonuclease-like protein 10 (212 aa).

Positions 1-24 (MKVTLVHLLFMMLLLLLGLGVGLG) are cleaved as a signal peptide. Asparagine 129 and asparagine 204 each carry an N-linked (GlcNAc...) asparagine glycan.

This sequence belongs to the pancreatic ribonuclease family. The N-terminus is blocked. Glycosylated. In terms of tissue distribution, male-specific expression in proximal caput of the epididymis.

It localises to the secreted. Its function is as follows. Secreted proximal epididymal protein required for post-testicular sperm maturation and male fertility. May be involved in sperm adhesion to the egg zona pellucida. Does not have ribonuclease activity. This chain is Inactive ribonuclease-like protein 10 (Rnase10), found in Rattus norvegicus (Rat).